Here is a 463-residue protein sequence, read N- to C-terminus: Elongation factor 1-alpha 2 (463 aa).

Gly-2 carries the n,N,N-trimethylglycine modification. Residues 5-242 (KTHINIVVIG…DTILPPTRPT (238 aa)) enclose the tr-type G domain. Residues 14-21 (GHVDSGKS) are G1. 6 residues coordinate GTP: Asp-17, Ser-18, Gly-19, Lys-20, Ser-21, and Thr-22. Asp-17 provides a ligand contact to Mg(2+). Residue Lys-36 is modified to N6,N6,N6-trimethyllysine; alternate. An N6,N6-dimethyllysine; alternate modification is found at Lys-36. Residue Lys-36 is modified to N6-methyllysine; alternate. The residue at position 55 (Lys-55) is an N6,N6,N6-trimethyllysine. Lys-55 bears the N6,N6-dimethyllysine mark. The tract at residues 70–74 (GITID) is G2. Lys-79 is subject to N6,N6,N6-trimethyllysine. Positions 91–94 (DAPG) are G3. Residues Asn-153, Lys-154, and Asp-156 each coordinate GTP. The tract at residues 153–156 (NKMD) is G4. Ser-163 carries the post-translational modification Phosphoserine. Position 165 is an N6,N6-dimethyllysine; alternate (Lys-165). Lys-165 is subject to N6-methyllysine; alternate. Lys-165 is modified (N6,N6,N6-trimethyllysine; alternate; by EEF1AKMT3). Lys-179 is modified (N6-acetyllysine). Positions 194, 195, and 196 each coordinate GTP. Residues 194–196 (SGW) are G5. Ser-224 carries the post-translational modification Phosphoserine. Phosphothreonine is present on Thr-239. A 5-glutamyl glycerylphosphorylethanolamine mark is found at Glu-301 and Glu-374. Lys-439 is modified (N6-acetyllysine). Residues 444–463 (KSGGAGKVTKSAQKAQKAGK) are disordered.

It belongs to the TRAFAC class translation factor GTPase superfamily. Classic translation factor GTPase family. EF-Tu/EF-1A subfamily. In terms of assembly, homodimer; arranged in a 'head to tail' dimer configuration. Trimethylated at Lys-165 by EEF1AKMT3. Mono-, di-, and trimethylated at Lys-36 by EEF1AKMT4; trimethylated form is predominant. Methylation by EEF1AKMT4 contributes to the fine-tuning of translation rates for a subset of tRNAs. Trimethylated at the N-terminus and dimethylated at Lys-55 by METTL13.

The protein resides in the endoplasmic reticulum membrane. It carries out the reaction GTP + H2O = GDP + phosphate + H(+). Functionally, translation elongation factor that catalyzes the GTP-dependent binding of aminoacyl-tRNA (aa-tRNA) to the A-site of ribosomes during the elongation phase of protein synthesis. Base pairing between the mRNA codon and the aa-tRNA anticodon promotes GTP hydrolysis, releasing the aa-tRNA from EEF1A1 and allowing its accommodation into the ribosome. The growing protein chain is subsequently transferred from the P-site peptidyl tRNA to the A-site aa-tRNA, extending it by one amino acid through ribosome-catalyzed peptide bond formation. The chain is Elongation factor 1-alpha 2 (Eef1a2) from Rattus norvegicus (Rat).